Reading from the N-terminus, the 553-residue chain is Hydroxylamine reductase (553 aa).

Positions 3, 6, 18, and 25 each coordinate [2Fe-2S] cluster. Positions 249, 273, 317, 405, 433, 459, 493, and 495 each coordinate hybrid [4Fe-2O-2S] cluster. C405 bears the Cysteine persulfide mark.

It belongs to the HCP family. [2Fe-2S] cluster is required as a cofactor. It depends on hybrid [4Fe-2O-2S] cluster as a cofactor.

It is found in the cytoplasm. It catalyses the reaction A + NH4(+) + H2O = hydroxylamine + AH2 + H(+). In terms of biological role, catalyzes the reduction of hydroxylamine to form NH(3) and H(2)O. This is Hydroxylamine reductase from Actinobacillus succinogenes (strain ATCC 55618 / DSM 22257 / CCUG 43843 / 130Z).